The following is a 229-amino-acid chain: Ribonuclease 3 (229 aa).

Residues 5 to 127 form the RNase III domain; sequence LSRLERQLGY…LIGAIYLDAG (123 aa). Glu40 provides a ligand contact to Mg(2+). Asp44 is a catalytic residue. Residues Asp113 and Glu116 each contribute to the Mg(2+) site. Glu116 is an active-site residue. The DRBM domain maps to 154–224; that stretch reads DPKTRLQEFL…AAAALIALGV (71 aa).

This sequence belongs to the ribonuclease III family. In terms of assembly, homodimer. Mg(2+) serves as cofactor.

Its subcellular location is the cytoplasm. It catalyses the reaction Endonucleolytic cleavage to 5'-phosphomonoester.. Digests double-stranded RNA. Involved in the processing of primary rRNA transcript to yield the immediate precursors to the large and small rRNAs (23S and 16S). Processes some mRNAs, and tRNAs when they are encoded in the rRNA operon. Processes pre-crRNA and tracrRNA of type II CRISPR loci if present in the organism. This is Ribonuclease 3 from Pseudomonas fluorescens (strain Pf0-1).